The primary structure comprises 141 residues: Large ribosomal subunit protein uL11 (141 aa).

It belongs to the universal ribosomal protein uL11 family. As to quaternary structure, part of the ribosomal stalk of the 50S ribosomal subunit. Interacts with L10 and the large rRNA to form the base of the stalk. L10 forms an elongated spine to which L12 dimers bind in a sequential fashion forming a multimeric L10(L12)X complex. One or more lysine residues are methylated.

In terms of biological role, forms part of the ribosomal stalk which helps the ribosome interact with GTP-bound translation factors. The sequence is that of Large ribosomal subunit protein uL11 from Streptococcus pneumoniae (strain Hungary19A-6).